We begin with the raw amino-acid sequence, 142 residues long: Large ribosomal subunit protein uL11 (142 aa).

This sequence belongs to the universal ribosomal protein uL11 family. As to quaternary structure, part of the ribosomal stalk of the 50S ribosomal subunit. Interacts with L10 and the large rRNA to form the base of the stalk. L10 forms an elongated spine to which L12 dimers bind in a sequential fashion forming a multimeric L10(L12)X complex. Post-translationally, one or more lysine residues are methylated.

Functionally, forms part of the ribosomal stalk which helps the ribosome interact with GTP-bound translation factors. The sequence is that of Large ribosomal subunit protein uL11 from Klebsiella pneumoniae subsp. pneumoniae (strain ATCC 700721 / MGH 78578).